A 499-amino-acid chain; its full sequence is MDNMNHEELNDQLLVRREKLHNLREQGIDPFGKRFERTNSTTDLVSLYGEFSKEELEEKEITVSIAGRIMTKRGKGKAGFAHIQDLHGQVQIYVRKDTVGDEEYELFTTADLGDLVGIEGKVFKTNVGELSVKATGFTLLTKSLRPLPDKYHGLKDVEQRYRQRYLDLITSMESRETFVTRSKIIREMRRYLDDNGYLEVETPMMHAIAGGASARPFTTHHNALDMELYMRIAIELHLKRLIVGGLEKVYEIGRVFRNEGVSTRHNPEFTMIELYEAYADYNDIMKLTENMVAHIAKKVLGTTTIQYGDYEINLEPEWTRLHMVDAIKQHSGADFWNPMSVEEARELAKEHNVEIKDTMEVGHIINEFFEQKVEDKLIQPTFIYGHPVEISPLAKKNDEDPRFTDRFELFIVAREHANAFTELNDPIDQKERFEAQLKEREQGNDEAHMMDDDYIEALEYGMPPTGGLGIGIDRLVMLLTNAPSIRDVLLFPAMRHKQD.

Mg(2+)-binding residues include Glu-408 and Glu-415.

The protein belongs to the class-II aminoacyl-tRNA synthetase family. In terms of assembly, homodimer. Requires Mg(2+) as cofactor.

It is found in the cytoplasm. The enzyme catalyses tRNA(Lys) + L-lysine + ATP = L-lysyl-tRNA(Lys) + AMP + diphosphate. The chain is Lysine--tRNA ligase from Bacillus cereus (strain G9842).